A 180-amino-acid chain; its full sequence is Pro-glucagon (180 aa).

A signal peptide spans 1-20 (MKNIYIVAGFFVVLVQGSWQ). The tract at residues 25 to 59 (DTEEKSRSFPASQTDPLEDPDQINEDKRHSQGTFT) is disordered. At S54 the chain carries Phosphoserine. Positions 84-89 (NRNNIA) are excised as a propeptide. Phosphoserine is present on residues S105 and S108. At R127 the chain carries Arginine amide. Residues 131–145 (DFPEEVTIVEELGRR) constitute a propeptide that is removed on maturation. 2 positions are modified to phosphoserine: S150 and S152.

This sequence belongs to the glucagon family. Proglucagon is post-translationally processed in a tissue-specific manner in pancreatic A cells and intestinal L cells. In pancreatic A cells, the major bioactive hormone is glucagon cleaved by PCSK2/PC2. In the intestinal L cells PCSK1/PC1 liberates GLP-1, GLP-2, glicentin and oxyntomodulin. GLP-1 is further N-terminally truncated by post-translational processing in the intestinal L cells resulting in GLP-1(7-37) GLP-1-(7-36)amide. The C-terminal amidation is neither important for the metabolism of GLP-1 nor for its effects on the endocrine pancreas.

Its subcellular location is the secreted. Its function is as follows. Plays a key role in glucose metabolism and homeostasis. Regulates blood glucose by increasing gluconeogenesis and decreasing glycolysis. A counterregulatory hormone of insulin, raises plasma glucose levels in response to insulin-induced hypoglycemia. Plays an important role in initiating and maintaining hyperglycemic conditions in diabetes. Functionally, potent stimulator of glucose-dependent insulin release. Also stimulates insulin release in response to IL6. Plays important roles on gastric motility and the suppression of plasma glucagon levels. May be involved in the suppression of satiety and stimulation of glucose disposal in peripheral tissues, independent of the actions of insulin. Has growth-promoting activities on intestinal epithelium. May also regulate the hypothalamic pituitary axis (HPA) via effects on LH, TSH, CRH, oxytocin, and vasopressin secretion. Increases islet mass through stimulation of islet neogenesis and pancreatic beta cell proliferation. Inhibits beta cell apoptosis. Stimulates intestinal growth and up-regulates villus height in the small intestine, concomitant with increased crypt cell proliferation and decreased enterocyte apoptosis. The gastrointestinal tract, from the stomach to the colon is the principal target for GLP-2 action. Plays a key role in nutrient homeostasis, enhancing nutrient assimilation through enhanced gastrointestinal function, as well as increasing nutrient disposal. Stimulates intestinal glucose transport and decreases mucosal permeability. In terms of biological role, significantly reduces food intake. Inhibits gastric emptying in humans. Suppression of gastric emptying may lead to increased gastric distension, which may contribute to satiety by causing a sensation of fullness. Its function is as follows. May modulate gastric acid secretion and the gastro-pyloro-duodenal activity. May play an important role in intestinal mucosal growth in the early period of life. This chain is Pro-glucagon (GCG), found in Mesocricetus auratus (Golden hamster).